A 609-amino-acid polypeptide reads, in one-letter code: N-acetyltransferase ESCO2 (609 aa).

Disordered regions lie at residues 1–71, 100–165, 197–241, and 314–357; these read MLSR…RVSP, EAKS…TDQV, KKPT…SPVR, and PDHD…LTAT. 2 stretches are compositionally biased toward polar residues: residues 13-22 and 41-54; these read AESNPSKKQI and ISLNSPQKIPSTPK. The span at 126-135 shows a compositional bias: basic residues; sequence PAKKVQKKPR. A compositionally biased stretch (basic and acidic residues) spans 214-230; it reads PTYEKPSIRKPVREKEL. Residues 345–355 are compositionally biased toward polar residues; sequence PLNSSTPSALT. The segment at 392-416 adopts a CCHH-type zinc-finger fold; it reads TTCASCGMLYSTDSPEDNFQHTQFH.

The protein belongs to the acetyltransferase family. ECO subfamily.

Its subcellular location is the nucleus. It localises to the chromosome. It catalyses the reaction L-lysyl-[protein] + acetyl-CoA = N(6)-acetyl-L-lysyl-[protein] + CoA + H(+). Its function is as follows. Acetyltransferase required for the establishment of sister chromatid cohesion. Couples the processes of cohesion and DNA replication to ensure that only sister chromatids become paired together. Essential for early development. This chain is N-acetyltransferase ESCO2 (esco2), found in Danio rerio (Zebrafish).